The sequence spans 145 residues: 3-dehydroquinate dehydratase 1 (145 aa).

Tyr24 serves as the catalytic Proton acceptor. Substrate contacts are provided by Asn75, His81, and Asp88. Residue His101 is the Proton donor of the active site. Substrate-binding positions include Ile102 to Ser103 and Arg112.

This sequence belongs to the type-II 3-dehydroquinase family. As to quaternary structure, homododecamer.

It carries out the reaction 3-dehydroquinate = 3-dehydroshikimate + H2O. It participates in metabolic intermediate biosynthesis; chorismate biosynthesis; chorismate from D-erythrose 4-phosphate and phosphoenolpyruvate: step 3/7. Functionally, catalyzes a trans-dehydration via an enolate intermediate. This Agrobacterium fabrum (strain C58 / ATCC 33970) (Agrobacterium tumefaciens (strain C58)) protein is 3-dehydroquinate dehydratase 1 (aroQ1).